Consider the following 428-residue polypeptide: Elongation factor 1-alpha (428 aa).

The tr-type G domain occupies 5–225 (KPVLNVAFIG…DKFQPPEKPT (221 aa)). The interval 14 to 21 (GHVDAGKS) is G1. 14–21 (GHVDAGKS) lines the GTP pocket. A Mg(2+)-binding site is contributed by Ser-21. A G2 region spans residues 70-74 (GVTID). A G3 region spans residues 91-94 (DCPG). Residues 91-95 (DCPGH) and 149-152 (NKMD) each bind GTP. The G4 stretch occupies residues 149-152 (NKMD). The segment at 189 to 191 (ASL) is G5.

This sequence belongs to the TRAFAC class translation factor GTPase superfamily. Classic translation factor GTPase family. EF-Tu/EF-1A subfamily.

Its subcellular location is the cytoplasm. It catalyses the reaction GTP + H2O = GDP + phosphate + H(+). GTP hydrolase that promotes the GTP-dependent binding of aminoacyl-tRNA to the A-site of ribosomes during protein biosynthesis. This is Elongation factor 1-alpha from Methanocaldococcus jannaschii (strain ATCC 43067 / DSM 2661 / JAL-1 / JCM 10045 / NBRC 100440) (Methanococcus jannaschii).